The sequence spans 289 residues: Tachykinins (289 aa).

The first 24 residues, 1–24 (MRPLSGLIALALLLLLLLTAPSSA), serve as a signal peptide directing secretion. The interval 24–94 (AADTETESSG…DEEADSSYAE (71 aa)) is disordered. A propeptide spanning residues 25-47 (ADTETESSGSPLTPGAEEPRRVV) is cleaved from the precursor. An Arginine amide modification is found at Arg59. The segment covering 60 to 69 (GKKDEEHDTS) has biased composition (basic and acidic residues). Asn95 is subject to Asparagine amide. Arg110 bears the Arginine amide mark. Val153 is subject to Valine amide. An arginine amide mark is found at Arg165, Arg200, Arg239, and Arg281. Residues 285–289 (PALFE) constitute a propeptide that is removed on maturation.

The protein belongs to the tachykinin family. In terms of tissue distribution, strong expression is seen in a group of 14 cells plus one isolated cell in the midgut of stage 17 embryos. Also expressed in a pair of medially located unidentified cells, just posterior to the brain, and in two lateral groups of cells that may be associated with tracheae. Expression in the larval gut is restricted to cells with endocrine cell-like morphology in the posterior midgut, just anterior to the malphigian tubules. In the brain, expression is detected in a restricted number of neuronal cell bodies. Expression in the adult female gut is restricted to the midgut with no expression detected in the hindgut.

The protein resides in the secreted. In terms of biological role, tachykinins are active peptides which excite neurons, evoke behavioral responses, are potent vasodilators and secretagogues, and contract (directly or indirectly) many smooth muscles. Stimulates gut muscle contractions. Required for the response to the male sex pheromone CH503 which is transferred from males to females during mating and inhibits courtship behavior by other males. The Gr68a gustatory receptor is required for detection of the pheromone and Gr68a-expressing neurons in the male foreleg relay signals to the suboesophageal zone (SEZ) which leads to courtship suppression through release of tachykinin from a cluster of 8-10 neurons in the SEZ. The protein is Tachykinins of Drosophila melanogaster (Fruit fly).